Here is a 521-residue protein sequence, read N- to C-terminus: ATP synthase subunit beta (521 aa).

Low complexity-rich tracts occupy residues 1 to 21 and 28 to 42; these read MAKA…AAKA and PKTT…TKSG. Residues 1-42 form a disordered region; sequence MAKAATPKTTAAAEAKPAAKAPAKKAAPKTTAAAKPAATKSG. 199–206 lines the ATP pocket; it reads GGAGVGKT.

This sequence belongs to the ATPase alpha/beta chains family. As to quaternary structure, F-type ATPases have 2 components, CF(1) - the catalytic core - and CF(0) - the membrane proton channel. CF(1) has five subunits: alpha(3), beta(3), gamma(1), delta(1), epsilon(1). CF(0) has three main subunits: a(1), b(2) and c(9-12). The alpha and beta chains form an alternating ring which encloses part of the gamma chain. CF(1) is attached to CF(0) by a central stalk formed by the gamma and epsilon chains, while a peripheral stalk is formed by the delta and b chains.

The protein localises to the cell inner membrane. It carries out the reaction ATP + H2O + 4 H(+)(in) = ADP + phosphate + 5 H(+)(out). Produces ATP from ADP in the presence of a proton gradient across the membrane. The catalytic sites are hosted primarily by the beta subunits. The protein is ATP synthase subunit beta of Brucella abortus (strain 2308).